Consider the following 184-residue polypeptide: GMP synthase [glutamine-hydrolyzing] subunit A (184 aa).

One can recognise a Glutamine amidotransferase type-1 domain in the interval 3-184; the sequence is RIVVVDNHGQ…ENFRDICAGD (182 aa). Cys73 (nucleophile) is an active-site residue. Residues His161 and Glu163 contribute to the active site.

As to quaternary structure, heterodimer composed of a glutamine amidotransferase subunit (A) and a GMP-binding subunit (B).

The enzyme catalyses XMP + L-glutamine + ATP + H2O = GMP + L-glutamate + AMP + diphosphate + 2 H(+). It functions in the pathway purine metabolism; GMP biosynthesis; GMP from XMP (L-Gln route): step 1/1. In terms of biological role, catalyzes the synthesis of GMP from XMP. This chain is GMP synthase [glutamine-hydrolyzing] subunit A, found in Natronomonas pharaonis (strain ATCC 35678 / DSM 2160 / CIP 103997 / JCM 8858 / NBRC 14720 / NCIMB 2260 / Gabara) (Halobacterium pharaonis).